We begin with the raw amino-acid sequence, 343 residues long: Heat-inducible transcription repressor HrcA (343 aa).

The protein belongs to the HrcA family.

In terms of biological role, negative regulator of class I heat shock genes (grpE-dnaK-dnaJ and groELS operons). Prevents heat-shock induction of these operons. In Mycoplasma genitalium (strain ATCC 33530 / DSM 19775 / NCTC 10195 / G37) (Mycoplasmoides genitalium), this protein is Heat-inducible transcription repressor HrcA.